We begin with the raw amino-acid sequence, 349 residues long: 4-hydroxy-3-methylbut-2-en-1-yl diphosphate synthase (flavodoxin) (349 aa).

The [4Fe-4S] cluster site is built by Cys264, Cys267, Cys299, and Glu306.

Belongs to the IspG family. Requires [4Fe-4S] cluster as cofactor.

It carries out the reaction (2E)-4-hydroxy-3-methylbut-2-enyl diphosphate + oxidized [flavodoxin] + H2O + 2 H(+) = 2-C-methyl-D-erythritol 2,4-cyclic diphosphate + reduced [flavodoxin]. It participates in isoprenoid biosynthesis; isopentenyl diphosphate biosynthesis via DXP pathway; isopentenyl diphosphate from 1-deoxy-D-xylulose 5-phosphate: step 5/6. In terms of biological role, converts 2C-methyl-D-erythritol 2,4-cyclodiphosphate (ME-2,4cPP) into 1-hydroxy-2-methyl-2-(E)-butenyl 4-diphosphate. The chain is 4-hydroxy-3-methylbut-2-en-1-yl diphosphate synthase (flavodoxin) from Clostridium perfringens (strain 13 / Type A).